Here is a 91-residue protein sequence, read N- to C-terminus: Acylphosphatase (91 aa).

The region spanning 6-91 is the Acylphosphatase-like domain; sequence CMRCYISGRV…WEDYITFDVL (86 aa). Residues arginine 21 and asparagine 39 contribute to the active site.

It belongs to the acylphosphatase family.

The catalysed reaction is an acyl phosphate + H2O = a carboxylate + phosphate + H(+). The polypeptide is Acylphosphatase (acyP) (Legionella pneumophila (strain Lens)).